Consider the following 350-residue polypeptide: Autophagy-related protein 3 (350 aa).

The segment at 85-166 is flexible region; the sequence is NFAGDAGLEE…EEDDEAIIRD (82 aa). A disordered region spans residues 97 to 171; sequence VDDGDEFKGS…AIIRDTDASG (75 aa). Residues 102 to 113 show a composition bias toward basic and acidic residues; that stretch reads EFKGSKGDDDGW. The span at 146–161 shows a compositional bias: acidic residues; it reads DDDDDIPDMEDEEDDE. Cys244 functions as the Glycyl thioester intermediate in the catalytic mechanism. A handle region region spans residues 248-326; the sequence is PVMKTLLDRA…DQEVAIRVDQ (79 aa). Lys262 and Lys267 each carry N6-acetyllysine.

This sequence belongs to the ATG3 family. Monomer. Interacts with ATG8 through an intermediate thioester bond through the C-terminal Gly of ATG8. Also interacts with the 40 amino acid C-terminal region of the E1-like ATG7 enzyme. Also interacts with the ATG12-ATG5 conjugate. Interacts with HAT1. Acetylated by HAT1 at Lys-262 and Lys-267, which affects the interaction with ATG8 and prevents autophagy during both appressorium development and nutrient starvation.

It localises to the preautophagosomal structure. The protein resides in the cytoplasm. E2 conjugating enzyme required for the cytoplasm to vacuole transport (Cvt) and autophagy. Required for selective autophagic degradation of the nucleus (nucleophagy) as well as for mitophagy which contributes to regulate mitochondrial quantity and quality by eliminating the mitochondria to a basal level to fulfill cellular energy requirements and preventing excess ROS production. Responsible for the E2-like covalent binding of phosphatidylethanolamine to the C-terminal Gly of ATG8. The ATG12-ATG5 conjugate plays a role of an E3 and promotes the transfer of ATG8 from ATG3 to phosphatidylethanolamine (PE). This step is required for the membrane association of ATG8. The formation of the ATG8-phosphatidylethanolamine conjugate is essential for autophagy and for the cytoplasm to vacuole transport (Cvt). The ATG8-PE conjugate mediates tethering between adjacent membranes and stimulates membrane hemifusion, leading to expansion of the autophagosomal membrane during autophagy. Plays a role in appressorium formation and pathogenicity. The chain is Autophagy-related protein 3 from Pyricularia oryzae (strain 70-15 / ATCC MYA-4617 / FGSC 8958) (Rice blast fungus).